Consider the following 631-residue polypeptide: MBT domain-containing protein 1 (631 aa).

Residues 1–31 (MFDGYDSCSEDTSSSSSSEESEEEVAPLPSN) form a disordered region. The FCS-type zinc-finger motif lies at 45 to 80 (PDGKSGMATCEMCGMVGVRDAFYSKTKRFCSVSCSR). Positions 54, 57, 74, and 78 each coordinate Zn(2+). An N6-acetyllysine modification is found at lysine 115. MBT repeat units follow at residues 144-248 (FSWG…LVPP), 256-353 (TNWK…IGHR), 354-459 (FKRS…LTPP), and 467-563 (FKWF…LQPP). The segment at 563–631 (PASQSSRESQ…SATVYIKQEP (69 aa)) is disordered. The segment covering 564–576 (ASQSSRESQSASS) has biased composition (low complexity). Over residues 577–593 (KQKKKAKSQQYKGHKKM) the composition is skewed to basic residues.

As to quaternary structure, monomer. Component of the NuA4 histone acetyltransferase complex. Interacts with EPC1; interaction is direct and promotes recruitment of MBTD1 into the NuA4 histone acetyltransferase complex.

The protein resides in the nucleus. The protein localises to the chromosome. Chromatin reader component of the NuA4 histone acetyltransferase complex, a multiprotein complex involved in transcriptional activation of select genes principally by acetylation of nucleosomal histones H4 and H2A. The NuA4 complex plays a direct role in repair of DNA double-strand breaks (DSBs) by promoting homologous recombination (HR). MBTD1 specifically recognizes and binds monomethylated and dimethylated 'Lys-20' on histone H4 (H4K20me1 and H4K20me2, respectively). In the NuA4 complex, MBTD1 promotes recruitment of the complex to H4K20me marks by competing with TP53BP1 for binding to H4K20me. Following recruitment to H4K20me at DNA breaks, the NuA4 complex catalyzes acetylation of 'Lys-15' on histone H2A (H2AK15), blocking the ubiquitination mark required for TP53BP1 localization at DNA breaks, thereby promoting homologous recombination (HR). The protein is MBT domain-containing protein 1 of Mus musculus (Mouse).